A 244-amino-acid polypeptide reads, in one-letter code: Small ribosomal subunit protein uS3 (244 aa).

In terms of domain architecture, KH type-2 spans 39–110; it reads IRNFIQKKYS…QVRINVVEVE (72 aa). Positions 221 to 244 are disordered; the sequence is GAIPRRKGSRKPQQFEDRSSNENS. Positions 233–244 are enriched in basic and acidic residues; that stretch reads QQFEDRSSNENS.

This sequence belongs to the universal ribosomal protein uS3 family. As to quaternary structure, part of the 30S ribosomal subunit. Forms a tight complex with proteins S10 and S14.

Its function is as follows. Binds the lower part of the 30S subunit head. Binds mRNA in the 70S ribosome, positioning it for translation. The polypeptide is Small ribosomal subunit protein uS3 (Prochlorococcus marinus (strain MIT 9515)).